A 479-amino-acid polypeptide reads, in one-letter code: Proline--tRNA ligase (479 aa).

It belongs to the class-II aminoacyl-tRNA synthetase family. ProS type 3 subfamily. In terms of assembly, homodimer.

Its subcellular location is the cytoplasm. It carries out the reaction tRNA(Pro) + L-proline + ATP = L-prolyl-tRNA(Pro) + AMP + diphosphate. Its function is as follows. Catalyzes the attachment of proline to tRNA(Pro) in a two-step reaction: proline is first activated by ATP to form Pro-AMP and then transferred to the acceptor end of tRNA(Pro). This chain is Proline--tRNA ligase, found in Mesomycoplasma hyopneumoniae (strain 7448) (Mycoplasma hyopneumoniae).